Reading from the N-terminus, the 1004-residue chain is NACHT, LRR and PYD domains-containing protein 9C (1004 aa).

Positions 1–92 (MVDSSSYGLL…TMAQIERRDK (92 aa)) constitute a Pyrin domain. One can recognise an NACHT domain in the interval 143–465 (ATAVVLGTRG…KQDKDTYHPV (323 aa)). Position 149–156 (149–156 (GTRGKGKT)) interacts with ATP. LRR repeat units lie at residues 750-770 (KVKH…MFLC), 779-800 (VLES…HLYE), 807-828 (HLSL…LLCE), 836-857 (TLKE…EISA), and 864-884 (NLKT…KRLC).

The protein belongs to the NLRP family. As to expression, oocyte specific.

The protein resides in the cytoplasm. Its function is as follows. May be involved in inflammation. The chain is NACHT, LRR and PYD domains-containing protein 9C (Nlrp9c) from Mus musculus (Mouse).